The sequence spans 172 residues: 3-hydroxydecanoyl-[acyl-carrier-protein] dehydratase (172 aa).

Residue histidine 71 is part of the active site.

This sequence belongs to the thioester dehydratase family. FabA subfamily. Homodimer.

It localises to the cytoplasm. The enzyme catalyses a (3R)-hydroxyacyl-[ACP] = a (2E)-enoyl-[ACP] + H2O. It catalyses the reaction (3R)-hydroxydecanoyl-[ACP] = (2E)-decenoyl-[ACP] + H2O. The catalysed reaction is (2E)-decenoyl-[ACP] = (3Z)-decenoyl-[ACP]. Its pathway is lipid metabolism; fatty acid biosynthesis. Necessary for the introduction of cis unsaturation into fatty acids. Catalyzes the dehydration of (3R)-3-hydroxydecanoyl-ACP to E-(2)-decenoyl-ACP and then its isomerization to Z-(3)-decenoyl-ACP. Can catalyze the dehydratase reaction for beta-hydroxyacyl-ACPs with saturated chain lengths up to 16:0, being most active on intermediate chain length. The protein is 3-hydroxydecanoyl-[acyl-carrier-protein] dehydratase of Escherichia coli O127:H6 (strain E2348/69 / EPEC).